A 253-amino-acid chain; its full sequence is 20 kDa chaperonin, chloroplastic (253 aa).

A chloroplast-targeting transit peptide spans M1–K50. 2 cpn-10 domain regions span residues T60–E153 and D159–L252. The residue at position 212 (T212) is a Phosphothreonine.

Belongs to the GroES chaperonin family. Homotetramer. Forms stable complexes with CPN60 in the presence of ATP. Interacts with FSD1. Interacts with CLPT1 and CLPT2. Interacts with CHLH. Interacts with SPY. As to expression, ubiquitous. Most abundant in leaves and inflorescence. Low levels found in roots.

The protein localises to the plastid. It is found in the chloroplast. In terms of biological role, seems to function only as a co-chaperone, along with CPN60, and in certain cases is essential for the discharge of biologically active proteins from CPN60. Required to activate the iron superoxide dismutases (FeSOD). Functionally, involved in abscisic acid (ABA) signaling, independently of its co-chaperone role. Acts as a negative regulator of the CHLH-WRKY40 coupled ABA signaling pathway, downstream of CHLH and upstream of WRKY40. This chain is 20 kDa chaperonin, chloroplastic (CPN20), found in Arabidopsis thaliana (Mouse-ear cress).